Here is a 290-residue protein sequence, read N- to C-terminus: MKYIAYAFELTHRPDELTLETAYDLLSAELAEIGFESFEQNETCLRAYIPVSTDIASDIPALLEQFPLPGLLWQYSSEIQPDINWNEQWEKNFFRPIRIEDKCLVRAPFHPTDPDIPLELIISPQMAFGTGHHETTSLMMSYLLDMDLRGLRVLDMGCGTGILAILARKLGASSVTAIDIDDWCIRNTGENAALNDIRDIDVRIGDASLLADCPMFDLIIANINRNILLDDMSAYRSRLGNGGTLLLSGFYTEDIPILTECAEILGLTLSETRSRNNWAALRFTPDSPKR.

Positions 136, 157, 179, and 222 each coordinate S-adenosyl-L-methionine.

It belongs to the methyltransferase superfamily. PrmA family.

The protein localises to the cytoplasm. It carries out the reaction L-lysyl-[protein] + 3 S-adenosyl-L-methionine = N(6),N(6),N(6)-trimethyl-L-lysyl-[protein] + 3 S-adenosyl-L-homocysteine + 3 H(+). Functionally, methylates ribosomal protein L11. In Porphyromonas gingivalis (strain ATCC BAA-308 / W83), this protein is Ribosomal protein L11 methyltransferase.